The primary structure comprises 157 residues: Serine-protein kinase RsbW (157 aa).

Belongs to the anti-sigma-factor family.

It catalyses the reaction L-seryl-[protein] + ATP = O-phospho-L-seryl-[protein] + ADP + H(+). The enzyme catalyses L-threonyl-[protein] + ATP = O-phospho-L-threonyl-[protein] + ADP + H(+). In terms of biological role, negative regulator of sigma-B activity. Phosphorylates and inactivates its specific antagonist protein, RsbV. Upon phosphorylation of RsbV, RsbW is released and binds to sigma-B, thereby blocking its ability to form an RNA polymerase holoenzyme (E-sigma-B). The chain is Serine-protein kinase RsbW from Listeria monocytogenes serovar 1/2a (strain ATCC BAA-679 / EGD-e).